Reading from the N-terminus, the 121-residue chain is Large ribosomal subunit protein bL20 (121 aa).

Belongs to the bacterial ribosomal protein bL20 family.

Binds directly to 23S ribosomal RNA and is necessary for the in vitro assembly process of the 50S ribosomal subunit. It is not involved in the protein synthesizing functions of that subunit. This is Large ribosomal subunit protein bL20 from Orientia tsutsugamushi (strain Boryong) (Rickettsia tsutsugamushi).